Reading from the N-terminus, the 429-residue chain is Hemoglobinase (429 aa).

Residues 1-19 (MMLFSLFLISILHILLVKC) form the signal peptide. Residues 20-31 (QLDTNYEVSDET) constitute a propeptide that is removed on maturation. The active site involves His151. Residues 288–309 (FQGSRDKSSSENDEPPMKPRHS) form a disordered region. Positions 292 to 429 (RDKSSSENDE…INEAIIKICG (138 aa)) are excised as a propeptide.

This sequence belongs to the peptidase C13 family.

The enzyme catalyses Hydrolysis of proteins and small molecule substrates at -Asn-|-Xaa- bonds.. Functionally, this protease is used by the parasite for degradation of the host globin. The polypeptide is Hemoglobinase (Schistosoma mansoni (Blood fluke)).